The primary structure comprises 819 residues: Mitosis inhibitor protein kinase SWE1 (819 aa).

A Phosphoserine; by CDC5 modification is found at Ser36. Thr45 carries the phosphothreonine; by CDC28 modification. Phosphoserine; by CDC28 is present on residues Ser56 and Ser63. Ser70 is modified (phosphoserine). At Thr74 the chain carries Phosphothreonine; by CDC28. A disordered region spans residues 86–105 (KIEEEEEEEEEGKDEESVDS). The segment covering 88–102 (EEEEEEEEEGKDEES) has biased composition (acidic residues). Position 102 is a phosphoserine; by CDC5 (Ser102). Ser105 carries the post-translational modification Phosphoserine; by CDC28. A Phosphoserine; by CDC5, CDC28 and CLA4 modification is found at Ser111. The disordered stretch occupies residues 117 to 168 (ESVTTPITKRSAEKTNSPISLKQWNQRWFPKNDARTENTSSSSSYSVAKPNQ). Ser118 carries the post-translational modification Phosphoserine; by CDC5. Residues 118 to 142 (SVTTPITKRSAEKTNSPISLKQWNQ) are compositionally biased toward polar residues. Residues Thr121 and Thr124 each carry the phosphothreonine; by CDC28 modification. Ser127 bears the Phosphoserine; by CDC28 mark. Phosphothreonine; by CDC5 is present on Thr131. The residue at position 133 (Ser133) is a Phosphoserine; by CDC28. Position 136 is a phosphoserine; by CDC28 and CLA4 (Ser136). Phosphoserine; by CDC5 occurs at positions 156 and 169. Residue Thr196 is modified to Phosphothreonine; by CDC28. Phosphoserine; by CDC28 is present on Ser201. Ser225 and Ser254 each carry phosphoserine; by CDC5. Ser262 bears the Phosphoserine mark. A phosphoserine; by CDC28 mark is found at Ser263 and Ser266. A disordered region spans residues 278-297 (NQTNILSPTNSLVTNSSPQT). Thr280 bears the Phosphothreonine; by CDC5 mark. Phosphoserine occurs at positions 284 and 294. Position 312 is a phosphoserine; by CLA4 (Ser312). Positions 341 to 395 (PIIISSHHSTRKNPQPYQFRGRYDNDTDEEISTPTRRKSIIGATSQTHRESRPLS) are disordered. Residue Ser345 is modified to Phosphoserine. A phosphothreonine; by CDC28 mark is found at Thr367 and Thr373. Ser379 carries the phosphoserine; by CDC5 and CLA4 modification. Thr384 bears the Phosphothreonine; by CDC28 mark. Phosphoserine; by CDC5 and CLA4 is present on residues Ser395 and Ser438. The Protein kinase domain occupies 444–794 (FTNVHSIGKG…NQILQTEECL (351 aa)). ATP contacts are provided by residues 450–458 (IGKGQFSTV) and Lys473. The Proton acceptor role is filled by Asp579. Positions 584 and 597 each coordinate Mg(2+). Ser610 carries the post-translational modification Phosphoserine; by CDC5. Thr629 is subject to Phosphothreonine; by CDC5. Phosphothreonine; by CDC5 and CLA4 is present on Thr688. Residue Thr692 is modified to Phosphothreonine. Over residues 707 to 716 (SNNAGTSTVH) the composition is skewed to polar residues. A disordered region spans residues 707–736 (SNNAGTSTVHNNSNINNPNMNNGNDNNNVN). Residues 717 to 736 (NNSNINNPNMNNGNDNNNVN) show a composition bias toward low complexity. Lys741 participates in a covalent cross-link: Glycyl lysine isopeptide (Lys-Gly) (interchain with G-Cter in ubiquitin).

This sequence belongs to the protein kinase superfamily. Ser/Thr protein kinase family. WEE1 subfamily. As to quaternary structure, interacts with CLB2-CDC28. Partial hyperphosphorylation of SWE1 by CLB2-CDC28 stabilizes the ternary complex of SWE1 and CLB2-CDC28 and stimulates kinase activity of SWE1 in a positive feedback loop, maintaining CLB2-CDC28 in the tyrosine-phosphorylated state. Fully hyperphosphorylated SWE1 dissociates from CLB2-CDC28. Interacts with HSL7, KCC4 and MET30. Ubiquitinated by the SCF(MET30) complex, leading to its degradation by the proteasome. In terms of processing, phosphorylated progressively by CLA4, CLB2-CDC28 and CDC5. CLA4-dependent phosphorylation occurs in late S phase, followed by phosphorylation by CLB2-CDC28 in early G2, when the levels of mitotic CLB2 increases. This phosphorylation is critical for triggering subsequent SWE1-CDC5 interaction and CDC5-dependent phosphorylation. The resulting cumulative hyperphosphorylation down-regulates SWE1 by targeting it for ubiquitin-mediated degradation. This stepwise phosphorylation is thought to be a mechanism to integrate the different checkpoint requirements before entry into mitosis.

It is found in the bud neck. Its subcellular location is the nucleus. It carries out the reaction L-seryl-[protein] + ATP = O-phospho-L-seryl-[protein] + ADP + H(+). It catalyses the reaction L-threonyl-[protein] + ATP = O-phospho-L-threonyl-[protein] + ADP + H(+). In terms of biological role, protein kinase that acts as a negative regulator of entry into mitosis (G2 to M transition) by phosphorylating and inhibiting the mitosis-promoting cyclin B-bound CDC28 at 'Tyr-19'. SWE1-mediated inhibition of CDC28 acts in a cell size or morphogenesis checkpoint to delay mitosis in response to defects in growth, actin organization or bud formation. Inhibits the activity of B-type cyclins in replication initiation strongly for CLB2, moderately for CLB3 and CLB4, and there is no apparent inhibition for CLB5 and CLB6, correlating with the normal expression timing of those cyclins. Hyperphosphorylation and degradation of SWE1 when all checkpoint requirement are met releases CLB2-CDC28 from inhibition and allows for progression through the cell cycle. SWE1-dependent CDC28 phosphorylation is also required for pachytene arrest upon activation of the recombination checkpoint during meiosis. Also involved in the regulation of nitrogen starvation- and short chain alcohol-induced filamentous growth, or filamentous differentiation in response to slowed DNA synthesis. Can act both on serines and on tyrosines. The protein is Mitosis inhibitor protein kinase SWE1 (SWE1) of Saccharomyces cerevisiae (strain ATCC 204508 / S288c) (Baker's yeast).